The sequence spans 416 residues: Methylthioribose-1-phosphate isomerase (416 aa).

Asp280 functions as the Proton donor in the catalytic mechanism.

This sequence belongs to the eIF-2B alpha/beta/delta subunits family. MtnA subfamily.

The protein localises to the cytoplasm. The protein resides in the nucleus. The catalysed reaction is 5-(methylsulfanyl)-alpha-D-ribose 1-phosphate = 5-(methylsulfanyl)-D-ribulose 1-phosphate. It functions in the pathway amino-acid biosynthesis; L-methionine biosynthesis via salvage pathway; L-methionine from S-methyl-5-thio-alpha-D-ribose 1-phosphate: step 1/6. Catalyzes the interconversion of methylthioribose-1-phosphate (MTR-1-P) into methylthioribulose-1-phosphate (MTRu-1-P). The sequence is that of Methylthioribose-1-phosphate isomerase from Candida albicans (strain SC5314 / ATCC MYA-2876) (Yeast).